Reading from the N-terminus, the 38-residue chain is Mu-agatoxin-Hc1c (38 aa).

Cystine bridges form between Cys3-Cys19, Cys10-Cys24, Cys18-Cys34, and Cys26-Cys32. Ser38 is modified (serine amide).

Belongs to the neurotoxin 07 (Beta/delta-agtx) family. 02 (aga-3) subfamily. In terms of tissue distribution, expressed by the venom gland.

It is found in the secreted. Functionally, insecticidal neurotoxin that induces irreversible neuromuscular blockade in house crickets (A.domesticus). Modifies presynaptic voltage-gated sodium channels (Nav), causing them to open at the normal resting potential of the nerve. This leads to spontaneous release of neurotransmitter and repetitive action potentials in motor neurons. In Hololena curta (Funnel-web spider), this protein is Mu-agatoxin-Hc1c.